Consider the following 257-residue polypeptide: MVLIRVLANLLILQLSYAQKSSKLVVGGDECNINEHPFLVLVYHDGYQCGGTLINEEWVLTAAHCDGKKMKLRFGLHSKNVPNKDKQTRVPKEKFFCLSSKYFIKWGKDIMLIRLNRPVNNSTHIAPLSLPSSPPSQNTVCNIMGWGTISPTKEIYPDVPHCANISILDHAVCRAFYPGLLEKSKTLCAGILEGGKDICQGDSGGPLICNGQIQGIVSVGGNPCAEPRVPAIYTKVFDHLDWIKSIIAGNTAATCPL.

Positions 1–18 (MVLIRVLANLLILQLSYA) are cleaved as a signal peptide. A propeptide spanning residues 19–24 (QKSSKL) is cleaved from the precursor. One can recognise a Peptidase S1 domain in the interval 25-248 (VVGGDECNIN…HLDWIKSIIA (224 aa)). Cystine bridges form between Cys31/Cys162, Cys49/Cys65, Cys97/Cys255, Cys141/Cys209, Cys173/Cys188, and Cys199/Cys224. Residues His64 and Asp109 each act as charge relay system in the active site. 3 N-linked (GlcNAc...) asparagine glycosylation sites follow: Asn120, Asn121, and Asn164. The active-site Charge relay system is the Ser203.

It belongs to the peptidase S1 family. Snake venom subfamily. Monomer. In terms of tissue distribution, expressed by the venom gland.

It localises to the secreted. In terms of biological role, snake venom serine protease that may act in the hemostasis system of the prey. This is Snake venom serine protease KN3 from Trimeresurus stejnegeri (Chinese green tree viper).